Consider the following 472-residue polypeptide: Sulfate adenylyltransferase subunit 1 (472 aa).

In terms of domain architecture, tr-type G spans 22 to 239 (KELLRFLTCG…TVPIAGDKNY (218 aa)). The G1 stretch occupies residues 31 to 38 (GSVDDGKS). 31–38 (GSVDDGKS) serves as a coordination point for GTP. Residues 89-93 (GITID) form a G2 region. Residues 110–113 (DTPG) are G3. GTP-binding positions include 110 to 114 (DTPGH) and 165 to 168 (NKMD). The G4 stretch occupies residues 165 to 168 (NKMD). A G5 region spans residues 202-204 (SAL).

It belongs to the TRAFAC class translation factor GTPase superfamily. Classic translation factor GTPase family. CysN/NodQ subfamily. Heterodimer composed of CysD, the smaller subunit, and CysN.

It carries out the reaction sulfate + ATP + H(+) = adenosine 5'-phosphosulfate + diphosphate. It functions in the pathway sulfur metabolism; hydrogen sulfide biosynthesis; sulfite from sulfate: step 1/3. In terms of biological role, with CysD forms the ATP sulfurylase (ATPS) that catalyzes the adenylation of sulfate producing adenosine 5'-phosphosulfate (APS) and diphosphate, the first enzymatic step in sulfur assimilation pathway. APS synthesis involves the formation of a high-energy phosphoric-sulfuric acid anhydride bond driven by GTP hydrolysis by CysN coupled to ATP hydrolysis by CysD. This Cellvibrio japonicus (strain Ueda107) (Pseudomonas fluorescens subsp. cellulosa) protein is Sulfate adenylyltransferase subunit 1.